Here is a 153-residue protein sequence, read N- to C-terminus: Prefoldin subunit alpha (153 aa).

Belongs to the prefoldin subunit alpha family. As to quaternary structure, heterohexamer of two alpha and four beta subunits.

The protein resides in the cytoplasm. Its function is as follows. Molecular chaperone capable of stabilizing a range of proteins. Seems to fulfill an ATP-independent, HSP70-like function in archaeal de novo protein folding. In Methanothrix thermoacetophila (strain DSM 6194 / JCM 14653 / NBRC 101360 / PT) (Methanosaeta thermophila), this protein is Prefoldin subunit alpha.